We begin with the raw amino-acid sequence, 316 residues long: Protein lifeguard 2 (316 aa).

The tract at residues 1–46 (MTQGKLSVANKAPGTEGQQQANGEKKETPAVPSAPPSYEEATSGEG) is disordered. The next 3 membrane-spanning stretches (helical) occupy residues 106–126 (VYTILLIQLLVTLGVVALFTF), 138–158 (PGWYWASYAVFFATYLTLACC), and 165–185 (FPWNLILLTIFTLSMAYLTGM). N-linked (GlcNAc...) asparagine glycosylation occurs at Asn-191. Transmembrane regions (helical) follow at residues 194–214 (SVLLCLSITALVCLSVTVFSF), 225–245 (GVLFVLLMTLFFSGLILAILL), 251–271 (PWLHAVYAVLGAGVFTLFLAF), and 290–310 (IFGALNIYLDIIYIFTFFLQL).

It belongs to the BI1 family. LFG subfamily. In terms of assembly, interacts with FAS/TNFRSF6 and BAX.

It is found in the cell membrane. The protein localises to the membrane raft. It localises to the postsynaptic cell membrane. Its function is as follows. Antiapoptotic protein which protects cells uniquely from Fas-induced apoptosis. Regulates Fas-mediated apoptosis in neurons by interfering with caspase-8 activation. Plays a role in cerebellar development by affecting cerebellar size, internal granular layer (IGL) thickness, and Purkinje cell (PC) development. This chain is Protein lifeguard 2 (FAIM2), found in Bos taurus (Bovine).